An 894-amino-acid polypeptide reads, in one-letter code: Sorting nexin-14 (894 aa).

In terms of domain architecture, PXA spans 78–252; sequence SSKVDASLSE…LLIIFIDDSP (175 aa). One can recognise an RGS domain in the interval 284–416; the sequence is ELKQIREQQD…CHSDEYFRQL (133 aa). Ser496 carries the post-translational modification Phosphoserine. One can recognise a PX domain in the interval 518-638; it reads PYVDFFEDPS…DFLSPNGGET (121 aa).

This sequence belongs to the sorting nexin family.

Its subcellular location is the cytoplasm. It is found in the cell projection. The protein resides in the dendrite. Its function is as follows. Plays a role in maintaining normal neuronal excitability and synaptic transmission. May be involved in several stages of intracellular trafficking. The protein is Sorting nexin-14 (SNX14) of Pongo abelii (Sumatran orangutan).